A 358-amino-acid polypeptide reads, in one-letter code: Triacylglycerol lipase (358 aa).

The N-terminal stretch at 1–39 (MVRSMRSRVAARAVAWALAVMPLAGAAGLTMAASPAAVA) is a signal peptide. The AB hydrolase-1 domain occupies 48-327 (YPVILVHGLA…TSYHWNHLDE (280 aa)). Leucine 56 serves as a coordination point for substrate. Serine 126 (nucleophile) is an active-site residue. Residue glutamine 127 participates in substrate binding. Cysteine 229 and cysteine 308 form a disulfide bridge. A Ca(2+)-binding site is contributed by aspartate 280. Residues aspartate 302 and histidine 324 each act as charge relay system in the active site. Positions 326, 330, and 334 each coordinate Ca(2+).

It belongs to the AB hydrolase superfamily. Pseudomonas lipase family. As to quaternary structure, monomer. Interacts with lipase-specific foldase Lif. Ca(2+) serves as cofactor.

It is found in the secreted. The enzyme catalyses a triacylglycerol + H2O = a diacylglycerol + a fatty acid + H(+). Catalyzes the hydrolysis of triacylglycerol. This Burkholderia plantarii protein is Triacylglycerol lipase.